We begin with the raw amino-acid sequence, 267 residues long: MFKLDLQPSEKLFIPFITAGDPVPEVSIELAKSLQKAGATALELGVAYSDPLADGPVIQRASKRALDQGMNIVKAIELGGEMKKNGVNIPIILFTYYNPVLQLNKEYFFALLRENHIDGLLVPDLPLEESNSLQEECKSHEVTYISLVAPTSESRLKTIIEQAEGFVYCVSSLGVTGVRNEFNSSVYPFIRTVKNLSTVPVAVGFGISNREQVIKMNEISDGVVVGSALVRKIEELKDRLISAETRNQALQEFEDYAMAFSGLYSLK.

Residues Glu43 and Asp54 each act as proton acceptor in the active site.

This sequence belongs to the TrpA family. As to quaternary structure, tetramer of two alpha and two beta chains.

The catalysed reaction is (1S,2R)-1-C-(indol-3-yl)glycerol 3-phosphate + L-serine = D-glyceraldehyde 3-phosphate + L-tryptophan + H2O. It participates in amino-acid biosynthesis; L-tryptophan biosynthesis; L-tryptophan from chorismate: step 5/5. Its function is as follows. The alpha subunit is responsible for the aldol cleavage of indoleglycerol phosphate to indole and glyceraldehyde 3-phosphate. The protein is Tryptophan synthase alpha chain of Bacillus subtilis (strain 168).